We begin with the raw amino-acid sequence, 391 residues long: FLUCTUATING-LIGHT-ACCLIMATION protein 1, chloroplastic (391 aa).

The transit peptide at methionine 1–serine 48 directs the protein to the chloroplast. The chain crosses the membrane as a helical span at residues alanine 87–alanine 107. Positions serine 116–serine 138 are enriched in low complexity. Positions serine 116–proline 140 are disordered. The next 2 helical transmembrane spans lie at phenylalanine 168 to leucine 188 and tyrosine 321 to glycine 341.

This sequence belongs to the FLAP family.

The protein localises to the plastid. The protein resides in the chloroplast thylakoid membrane. It is found in the chloroplast membrane. It localises to the chloroplast envelope. Functionally, monitors proton H(+) homeostasis in chloroplasts to manipulate luminal acidification levels appropriately to balance photoprotection and photochemical processes. Required during acclimation response to fluctuating light (e.g. photosynthetic activity optimization) by controlling non-photochemical quenching (NPQ); acts independently from DLDG1. The protein is FLUCTUATING-LIGHT-ACCLIMATION protein 1, chloroplastic of Arabidopsis thaliana (Mouse-ear cress).